Consider the following 125-residue polypeptide: Ribonuclease P protein component (125 aa).

It belongs to the RnpA family. In terms of assembly, consists of a catalytic RNA component (M1 or rnpB) and a protein subunit.

The enzyme catalyses Endonucleolytic cleavage of RNA, removing 5'-extranucleotides from tRNA precursor.. In terms of biological role, RNaseP catalyzes the removal of the 5'-leader sequence from pre-tRNA to produce the mature 5'-terminus. It can also cleave other RNA substrates such as 4.5S RNA. The protein component plays an auxiliary but essential role in vivo by binding to the 5'-leader sequence and broadening the substrate specificity of the ribozyme. This chain is Ribonuclease P protein component, found in Idiomarina loihiensis (strain ATCC BAA-735 / DSM 15497 / L2-TR).